The following is a 249-amino-acid chain: Adenosylcobinamide-GDP ribazoletransferase (249 aa).

A run of 7 helical transmembrane segments spans residues 29–49 (LYWF…CAWL), 50–70 (PLSI…GFIV), 104–124 (VGSF…VAIL), 131–151 (AFAL…LLAA), 165–185 (GFVG…SLMM), 194–214 (PFLL…IGFL), and 226–246 (VLGA…GVAF).

Belongs to the CobS family. The cofactor is Mg(2+).

The protein resides in the cell inner membrane. The enzyme catalyses alpha-ribazole + adenosylcob(III)inamide-GDP = adenosylcob(III)alamin + GMP + H(+). It catalyses the reaction alpha-ribazole 5'-phosphate + adenosylcob(III)inamide-GDP = adenosylcob(III)alamin 5'-phosphate + GMP + H(+). Its pathway is cofactor biosynthesis; adenosylcobalamin biosynthesis; adenosylcobalamin from cob(II)yrinate a,c-diamide: step 7/7. In terms of biological role, joins adenosylcobinamide-GDP and alpha-ribazole to generate adenosylcobalamin (Ado-cobalamin). Also synthesizes adenosylcobalamin 5'-phosphate from adenosylcobinamide-GDP and alpha-ribazole 5'-phosphate. This chain is Adenosylcobinamide-GDP ribazoletransferase, found in Chlorobium phaeovibrioides (strain DSM 265 / 1930) (Prosthecochloris vibrioformis (strain DSM 265)).